We begin with the raw amino-acid sequence, 390 residues long: Na(+)/H(+) antiporter NhaA 1 (390 aa).

The next 11 membrane-spanning stretches (helical) occupy residues 14–34 (SGIL…NGVL), 59–79 (TILW…GLEL), 94–114 (VALP…IFYV), 125–145 (GWAI…FLLG), 154–174 (LFLL…IAIF), 179–199 (LSII…ILNY), 205–225 (IYIY…SGIH), 260–280 (PIVA…VVFS), 295–315 (IIFG…FLAI), 328–348 (WLHL…SLFI), and 362–382 (ANKI…YFVL).

The protein belongs to the NhaA Na(+)/H(+) (TC 2.A.33) antiporter family.

It is found in the cell inner membrane. The catalysed reaction is Na(+)(in) + 2 H(+)(out) = Na(+)(out) + 2 H(+)(in). Functionally, na(+)/H(+) antiporter that extrudes sodium in exchange for external protons. This chain is Na(+)/H(+) antiporter NhaA 1, found in Campylobacter fetus subsp. fetus (strain 82-40).